The sequence spans 364 residues: tRNA-specific 2-thiouridylase MnmA 1 (364 aa).

Residues 10–17 (GMSGGVDS) and Met-36 contribute to the ATP site. The Nucleophile role is filled by Cys-106. Cys-106 and Cys-204 are disulfide-bonded. An ATP-binding site is contributed by Gly-130. The interval 154-156 (KDQ) is interaction with tRNA. Cys-204 functions as the Cysteine persulfide intermediate in the catalytic mechanism. The segment at 310–311 (RY) is interaction with tRNA.

This sequence belongs to the MnmA/TRMU family.

The protein resides in the cytoplasm. The enzyme catalyses S-sulfanyl-L-cysteinyl-[protein] + uridine(34) in tRNA + AH2 + ATP = 2-thiouridine(34) in tRNA + L-cysteinyl-[protein] + A + AMP + diphosphate + H(+). Its function is as follows. Catalyzes the 2-thiolation of uridine at the wobble position (U34) of tRNA, leading to the formation of s(2)U34. This Thermoanaerobacter pseudethanolicus (strain ATCC 33223 / 39E) (Clostridium thermohydrosulfuricum) protein is tRNA-specific 2-thiouridylase MnmA 1.